The sequence spans 154 residues: 17 kDa surface antigen (154 aa).

The first 19 residues, 1–19, serve as a signal peptide directing secretion; it reads MKLLSKIMVIALATSMLQA. C20 carries the N-palmitoyl cysteine lipid modification. C20 carries S-diacylglycerol cysteine lipidation.

The protein belongs to the rickettsiale 17 kDa surface antigen family.

The protein localises to the cell outer membrane. The protein is 17 kDa surface antigen (omp) of Rickettsia parkeri.